The sequence spans 672 residues: Hydrogenase-4 component B (672 aa).

The Periplasmic segment spans residues 1 to 5 (MDALQ). The chain crosses the membrane as a helical span at residues 6–26 (LLTWSLILYLFASLASLFLLG). Residues 27–30 (LDRL) are Cytoplasmic-facing. A helical membrane pass occupies residues 31–51 (AIKLSGITSLVGGVIGIISGI). Residues 52–79 (TQLHAGVTLVARFAPPFEFADLTLRMDS) lie on the Periplasmic side of the membrane. The helical transmembrane segment at 80–100 (LSAFMVLVISLLVVVCSLYSL) threads the bilayer. Over 101-119 (TYMREYEGKGAAAMGFFMN) the chain is Cytoplasmic. A helical transmembrane segment spans residues 120–140 (IFIASMVALLVMDNAFWFIVL). Residues 141–164 (FEMMSLSSWFLVIARQDKTSINAG) lie on the Periplasmic side of the membrane. The helical transmembrane segment at 165-185 (MLYFFIAHAGSVLIMIAFLLM) threads the bilayer. Topologically, residues 186-199 (GRESGSLDFASFRT) are cytoplasmic. The chain crosses the membrane as a helical span at residues 200–220 (LSLSPGLASAVFLLAFFGFGA). Residues 221–242 (KAGMMPLHSWLPRAHPAAPSHA) lie on the Periplasmic side of the membrane. The helical transmembrane segment at 243–263 (SALMSGVMVKIGIFGILKVAM) threads the bilayer. Topologically, residues 264 to 272 (DLLAQTGLP) are cytoplasmic. The chain crosses the membrane as a helical span at residues 273 to 293 (LWWGILVMAIGAISALLGVLY). Topologically, residues 294 to 311 (ALAEQDIKRLLAWSTVEN) are periplasmic. Residues 312–332 (VGIILLAVGVAMVGLSLHDPL) traverse the membrane as a helical segment. Topologically, residues 333-342 (LTVVGLLGAL) are cytoplasmic. Residues 343–363 (FHLLNHALFKGLLFLGAGAII) form a helical membrane-spanning segment. Residues 364–384 (SRLHTHDMEKMGALAKRMPWT) are Periplasmic-facing. The helical transmembrane segment at 385–405 (AAACLIGCLAISAIPPLNGFI) threads the bilayer. The Cytoplasmic segment spans residues 406-427 (SEWYTWQSLFSLSRVEAVALQL). A helical transmembrane segment spans residues 428 to 448 (AGPIAMVMLAVTGGLAVMCFV). Over 449–474 (KMYGITFCGAPRSTHAEEAQEVPNTM) the chain is Periplasmic. Residues 475 to 495 (IVAMLLLAALCVLIALSASWL) form a helical membrane-spanning segment. Topologically, residues 496-504 (APKIMHIAH) are cytoplasmic. Residues 505–525 (AFTNTPPATVASGIALVPGTF) form a helical membrane-spanning segment. The Periplasmic portion of the chain corresponds to 526–531 (HTQVTP). A helical membrane pass occupies residues 532-552 (SLLLLLLLAMPLLPGLYWLWC). Topologically, residues 553 to 651 (RSRRAAFRRT…KEIQHLQSGD (99 aa)) are cytoplasmic. The chain crosses the membrane as a helical span at residues 652–672 (FRLYCLYVVAALVVLLIAIAV).

The protein belongs to the complex I subunit 5 family.

It is found in the cell inner membrane. Possible component of hydrogenase 4. This Escherichia coli (strain K12) protein is Hydrogenase-4 component B.